A 265-amino-acid polypeptide reads, in one-letter code: uncharacterized protein (265 aa).

It belongs to the MG067/MG068/MG395 family.

This is an uncharacterized protein from Mycoplasma pneumoniae (strain ATCC 29342 / M129 / Subtype 1) (Mycoplasmoides pneumoniae).